The following is a 254-amino-acid chain: 5'/3'-nucleotidase SurE (254 aa).

Positions 8, 9, 39, and 92 each coordinate a divalent metal cation.

This sequence belongs to the SurE nucleotidase family. It depends on a divalent metal cation as a cofactor.

Its subcellular location is the cytoplasm. The enzyme catalyses a ribonucleoside 5'-phosphate + H2O = a ribonucleoside + phosphate. The catalysed reaction is a ribonucleoside 3'-phosphate + H2O = a ribonucleoside + phosphate. It carries out the reaction [phosphate](n) + H2O = [phosphate](n-1) + phosphate + H(+). Nucleotidase with a broad substrate specificity as it can dephosphorylate various ribo- and deoxyribonucleoside 5'-monophosphates and ribonucleoside 3'-monophosphates with highest affinity to 3'-AMP. Also hydrolyzes polyphosphate (exopolyphosphatase activity) with the preference for short-chain-length substrates (P20-25). Might be involved in the regulation of dNTP and NTP pools, and in the turnover of 3'-mononucleotides produced by numerous intracellular RNases (T1, T2, and F) during the degradation of various RNAs. This is 5'/3'-nucleotidase SurE from Edwardsiella ictaluri (strain 93-146).